The sequence spans 477 residues: Otolin-1 (477 aa).

Positions 1–23 (MWMFSWLCAILIILAIAGMNTIA) are cleaved as a signal peptide. Disordered stretches follow at residues 28 to 55 (HTKF…PEEE) and 111 to 337 (QKGE…KGEL). Residues 33–42 (KKSEEREMPK) are compositionally biased toward basic and acidic residues. Residues 116 to 175 (GETGQPGPKGEAGNLGIPGPPGVVGPQGPRGYKGEKGLKGERGDQGVPGYPGKPGAQGEP) enclose the Collagen-like 1 domain. 2 positions are modified to hydroxyproline: proline 133 and proline 136. Positions 147 to 159 (YKGEKGLKGERGD) are enriched in basic and acidic residues. Residues proline 163, proline 166, and proline 169 each carry the hydroxyproline modification. Lysine 178 bears the 5-hydroxylysine mark. Lysine 178 carries an O-linked (Gal...) hydroxylysine glycan. Positions 182–191 (GNIGLGGVKG) are enriched in gly residues. Asparagine 202 carries N-linked (GlcNAc...) asparagine glycosylation. Collagen-like domains are found at residues 209–268 (GDQG…KGSK) and 278–337 (GRNG…KGEL). Proline 223 is modified (hydroxyproline). Basic and acidic residues-rich tracts occupy residues 226–240 (KGEK…EMGD) and 247–277 (SGER…EGKS). Residues proline 283 and proline 301 each carry the hydroxyproline modification. A compositionally biased stretch (low complexity) spans 298 to 310 (LGPPGLLGPTGPK). Lysine 310 carries the post-translational modification 5-hydroxylysine. Residue lysine 310 is glycosylated (O-linked (Gal...) hydroxylysine). The C1q domain occupies 338-473 (ARVPRSAFSA…GFLLYPEETS (136 aa)). The N-linked (GlcNAc...) asparagine glycan is linked to asparagine 381.

The protein belongs to the OTOL1 family. In terms of assembly, homooligomer; disulfide-linked; probably forms homotrimers. Interacts with OC90. Interacts with CBLN1.

It is found in the secreted. Its subcellular location is the extracellular space. The protein localises to the extracellular matrix. Functionally, collagen-like protein specifically expressed in the inner ear, which provides an organic scaffold for otoconia, a calcium carbonate structure in the saccule and utricle of the ear. Acts as a scaffold for biomineralization: sequesters calcium and forms interconnecting fibrils between otoconia that are incorporated into the calcium crystal structure. Together with OC90, modulates calcite crystal morphology and growth kinetics. The protein is Otolin-1 of Homo sapiens (Human).